The sequence spans 466 residues: Tyrosinase HcTyr1 (466 aa).

Cu cation is bound by residues His43, His78, His87, His211, His215, and His238.

The protein belongs to the tyrosinase family. As to quaternary structure, monomer. Formation of a dimer is observed when the protein is in its holo-form. The cofactor is Cu(2+). In vitro, the C-terminal lid-domain is slowly cleaved off in an autoprocessive time dependent manner, leading to the formation of cleaved-HcTyr1. The processing rate is not influenced by factors such as pH and added metal ions.

It carries out the reaction L-tyrosine + O2 = L-dopaquinone + H2O. The enzyme catalyses 2 L-tyrosine + O2 = 2 L-dopa. The catalysed reaction is 2 L-dopa + O2 = 2 L-dopaquinone + 2 H2O. Its activity is regulated as follows. Cleavage of the lid-domain increases activity levels, affinity for substrate and turnover rate. Exhibits high saline tolerance. Functionally, copper-containing oxidase that catalyzes the conversion of L-tyrosine to L-dopa and then to L-dopaquinone. Can use various phenols such as p-coumaric acid, phenol, pyrocatechol, syringol or pyrogallol. Accepts several of the constituents of lignin and potentially participates in lignin functionalization. In Hahella sp. (strain CCB-MM4), this protein is Tyrosinase HcTyr1.